A 208-amino-acid chain; its full sequence is Cytochrome c oxidase assembly protein CtaG (208 aa).

At 1–19 (MSPPLPQAPQQPAPRRGLG) the chain is on the cytoplasmic side. A helical; Signal-anchor for type II membrane protein membrane pass occupies residues 20 to 42 (HDTAVAAVCGLVVALMVGASFAA). The Periplasmic segment spans residues 43-208 (VPFYNWFCRT…SEPAPRKGNL (166 aa)).

This sequence belongs to the COX11/CtaG family.

The protein localises to the cell inner membrane. Exerts its effect at some terminal stage of cytochrome c oxidase synthesis, probably by being involved in the insertion of the copper B into subunit I. This Rhodopseudomonas palustris (strain TIE-1) protein is Cytochrome c oxidase assembly protein CtaG.